A 690-amino-acid chain; its full sequence is Probable tape measure protein (690 aa).

The protein belongs to the Mulikevirus tape measure protein family.

The protein localises to the host cytoplasm. Functionally, serves as a base for tail tube protein polymerization and acts as a template for tail length determination. Might remain in the tube and be ejected from the tail prior to the DNA during DNA ejection (Potential). The chain is Probable tape measure protein from Enterobacteriaceae (Bacteriophage Mu).